We begin with the raw amino-acid sequence, 347 residues long: Elongation factor Ts (347 aa).

The segment at 80-83 (TDFV) is involved in Mg(2+) ion dislocation from EF-Tu.

This sequence belongs to the EF-Ts family.

It is found in the cytoplasm. Its function is as follows. Associates with the EF-Tu.GDP complex and induces the exchange of GDP to GTP. It remains bound to the aminoacyl-tRNA.EF-Tu.GTP complex up to the GTP hydrolysis stage on the ribosome. This chain is Elongation factor Ts, found in Streptococcus sanguinis (strain SK36).